The primary structure comprises 360 residues: Phospho-N-acetylmuramoyl-pentapeptide-transferase (360 aa).

The next 10 membrane-spanning stretches (helical) occupy residues 27-47 (IVSL…LIGW), 72-92 (PTMG…MWAY), 94-114 (SNPY…VGFV), 132-152 (WKYF…YCIG), 168-188 (IMPQ…VGTS), 199-219 (GLAI…AWAT), 236-256 (AGEL…FLWF), 263-283 (VFMG…IAVL), 288-308 (FLLV…ILQV), and 338-358 (VIVR…ATLK).

The protein belongs to the glycosyltransferase 4 family. MraY subfamily. Requires Mg(2+) as cofactor.

Its subcellular location is the cell inner membrane. The catalysed reaction is UDP-N-acetyl-alpha-D-muramoyl-L-alanyl-gamma-D-glutamyl-meso-2,6-diaminopimeloyl-D-alanyl-D-alanine + di-trans,octa-cis-undecaprenyl phosphate = di-trans,octa-cis-undecaprenyl diphospho-N-acetyl-alpha-D-muramoyl-L-alanyl-D-glutamyl-meso-2,6-diaminopimeloyl-D-alanyl-D-alanine + UMP. It functions in the pathway cell wall biogenesis; peptidoglycan biosynthesis. Catalyzes the initial step of the lipid cycle reactions in the biosynthesis of the cell wall peptidoglycan: transfers peptidoglycan precursor phospho-MurNAc-pentapeptide from UDP-MurNAc-pentapeptide onto the lipid carrier undecaprenyl phosphate, yielding undecaprenyl-pyrophosphoryl-MurNAc-pentapeptide, known as lipid I. The sequence is that of Phospho-N-acetylmuramoyl-pentapeptide-transferase from Edwardsiella ictaluri (strain 93-146).